The primary structure comprises 302 residues: Probable alpha-L-glutamate ligase 1 (302 aa).

In terms of domain architecture, ATP-grasp spans Met-104 to Glu-287. ATP is bound by residues Lys-141, Glu-178 to Tyr-179, Asp-187, and Arg-211 to Asn-213. Mg(2+) contacts are provided by Asp-248, Glu-260, and Asn-262. Asp-248, Glu-260, and Asn-262 together coordinate Mn(2+).

Belongs to the RimK family. It depends on Mg(2+) as a cofactor. The cofactor is Mn(2+).

The chain is Probable alpha-L-glutamate ligase 1 from Pseudoalteromonas atlantica (strain T6c / ATCC BAA-1087).